The primary structure comprises 355 residues: Guanine nucleotide-binding protein G(z) subunit alpha (355 aa).

Over residues 1-14 (MGCRQSSEEKEAAR) the composition is skewed to basic and acidic residues. The tract at residues 1–26 (MGCRQSSEEKEAARRSRRIDRHLRSE) is disordered. Residue glycine 2 is the site of N-myristoyl glycine attachment. Cysteine 3 carries the S-palmitoyl cysteine lipid modification. One can recognise a G-alpha domain in the interval 32-355 (REIKLLLLGT…QNNLKYIGLC (324 aa)). The segment at 35-48 (KLLLLGTSNSGKST) is G1 motif. Residues 40–47 (GTSNSGKS), 176–182 (LRSRDMT), 201–205 (DVGGQ), 270–273 (NKKD), and alanine 327 each bind GTP. A Mg(2+)-binding site is contributed by serine 47. The tract at residues 174 to 182 (DILRSRDMT) is G2 motif. At arginine 179 the chain carries ADP-ribosylarginine; by cholera toxin. Residue threonine 182 coordinates Mg(2+). The interval 197–206 (FKMVDVGGQR) is G3 motif. Residues 266–273 (ILFLNKKD) are G4 motif. The tract at residues 325 to 330 (TCATDT) is G5 motif.

The protein belongs to the G-alpha family. G(i/o/t/z) subfamily. As to quaternary structure, G-proteins are composed of 3 units; alpha, beta and gamma. The alpha chain contains the guanine nucleotide binding site. Interacts with ADGRB2.

It localises to the membrane. Its function is as follows. Guanine nucleotide-binding proteins (G proteins) are involved as modulators or transducers in various transmembrane signaling systems. This Homo sapiens (Human) protein is Guanine nucleotide-binding protein G(z) subunit alpha (GNAZ).